A 562-amino-acid chain; its full sequence is Dihydroxy-acid dehydratase (562 aa).

Aspartate 78 contributes to the Mg(2+) binding site. [2Fe-2S] cluster is bound at residue cysteine 119. Positions 120 and 121 each coordinate Mg(2+). The residue at position 121 (lysine 121) is an N6-carboxylysine. [2Fe-2S] cluster is bound at residue cysteine 192. A Mg(2+)-binding site is contributed by glutamate 450. Serine 476 functions as the Proton acceptor in the catalytic mechanism.

It belongs to the IlvD/Edd family. Homodimer. It depends on [2Fe-2S] cluster as a cofactor. Requires Mg(2+) as cofactor.

The catalysed reaction is (2R)-2,3-dihydroxy-3-methylbutanoate = 3-methyl-2-oxobutanoate + H2O. It carries out the reaction (2R,3R)-2,3-dihydroxy-3-methylpentanoate = (S)-3-methyl-2-oxopentanoate + H2O. The protein operates within amino-acid biosynthesis; L-isoleucine biosynthesis; L-isoleucine from 2-oxobutanoate: step 3/4. Its pathway is amino-acid biosynthesis; L-valine biosynthesis; L-valine from pyruvate: step 3/4. Functionally, functions in the biosynthesis of branched-chain amino acids. Catalyzes the dehydration of (2R,3R)-2,3-dihydroxy-3-methylpentanoate (2,3-dihydroxy-3-methylvalerate) into 2-oxo-3-methylpentanoate (2-oxo-3-methylvalerate) and of (2R)-2,3-dihydroxy-3-methylbutanoate (2,3-dihydroxyisovalerate) into 2-oxo-3-methylbutanoate (2-oxoisovalerate), the penultimate precursor to L-isoleucine and L-valine, respectively. This is Dihydroxy-acid dehydratase from Nautilia profundicola (strain ATCC BAA-1463 / DSM 18972 / AmH).